Consider the following 406-residue polypeptide: Phosphopentomutase (406 aa).

Mn(2+)-binding residues include D10, D305, H310, D346, H347, and H358.

This sequence belongs to the phosphopentomutase family. The cofactor is Mn(2+).

The protein resides in the cytoplasm. It catalyses the reaction 2-deoxy-alpha-D-ribose 1-phosphate = 2-deoxy-D-ribose 5-phosphate. It carries out the reaction alpha-D-ribose 1-phosphate = D-ribose 5-phosphate. The protein operates within carbohydrate degradation; 2-deoxy-D-ribose 1-phosphate degradation; D-glyceraldehyde 3-phosphate and acetaldehyde from 2-deoxy-alpha-D-ribose 1-phosphate: step 1/2. Isomerase that catalyzes the conversion of deoxy-ribose 1-phosphate (dRib-1-P) and ribose 1-phosphate (Rib-1-P) to deoxy-ribose 5-phosphate (dRib-5-P) and ribose 5-phosphate (Rib-5-P), respectively. This is Phosphopentomutase from Rhizobium leguminosarum bv. trifolii (strain WSM2304).